The following is an 824-amino-acid chain: Leucine--tRNA ligase (824 aa).

Positions 42–52 (PYPSGKIHMGH) match the 'HIGH' region motif. A 'KMSKS' region motif is present at residues 581–585 (KMSKS). Lys584 is a binding site for ATP.

The protein belongs to the class-I aminoacyl-tRNA synthetase family.

Its subcellular location is the cytoplasm. It catalyses the reaction tRNA(Leu) + L-leucine + ATP = L-leucyl-tRNA(Leu) + AMP + diphosphate. The polypeptide is Leucine--tRNA ligase (Citrifermentans bemidjiense (strain ATCC BAA-1014 / DSM 16622 / JCM 12645 / Bem) (Geobacter bemidjiensis)).